The chain runs to 825 residues: Heterogeneous nuclear ribonucleoprotein U (825 aa).

Serine 2 carries the N-acetylserine; partial modification. Serine 4 bears the Phosphoserine mark. The 35-residue stretch at 8-42 (VKKLKVSELKEELKKRRLSDKGLKAELMERLQAAL) folds into the SAP domain. Residues lysine 17 and lysine 21 each carry the N6-acetyllysine modification. The interval 41-281 (ALDDEEAGGR…PQPPVEEEDE (241 aa)) is disordered. Position 59 is a phosphoserine; by PLK1 (serine 59). Serine 66 carries the phosphoserine modification. Residues 72-81 (AGLEQEAAAG) are compositionally biased toward low complexity. Composition is skewed to acidic residues over residues 82-95 (GDEEEEEEEEEEEG), 120-134 (PMEEEEAASEDENGD), and 140-153 (EGEDELGDEEEGAG). The segment covering 159 to 178 (GEQQPQPPATQQQQPQQQRG) has biased composition (low complexity). Residue lysine 186 is modified to N6-acetyllysine. ADP-ribosylserine is present on serine 187. A compositionally biased stretch (low complexity) spans 199-211 (APPGARQGQQQAG). N6-acetyllysine is present on lysine 215. The span at 233–266 (GKTEQKGGDKKRGVKRPREDHGRGYFEYIEENKY) shows a compositional bias: basic and acidic residues. Position 255 is a citrulline (arginine 255). Lysine 265 is modified (N6-acetyllysine; alternate). Lysine 265 participates in a covalent cross-link: Glycyl lysine isopeptide (Lys-Gly) (interchain with G-Cter in SUMO1); alternate. A Glycyl lysine isopeptide (Lys-Gly) (interchain with G-Cter in SUMO2); alternate cross-link involves residue lysine 265. Tyrosine 266 is modified (phosphotyrosine). Phosphoserine occurs at positions 267 and 271. The B30.2/SPRY domain occupies 267-464 (SRAKSPQPPV…VEFNFGQKEK (198 aa)). Threonine 286 bears the Phosphothreonine mark. The residue at position 352 (lysine 352) is an N6-acetyllysine. Residues 488 to 672 (PKGPEEKKDC…QKLLEQYKEE (185 aa)) are ATPase domain. A Glycyl lysine isopeptide (Lys-Gly) (interchain with G-Cter in SUMO2) cross-link involves residue lysine 495. 504-511 (GLPGAGKT) lines the ATP pocket. N6-acetyllysine; alternate is present on residues lysine 516 and lysine 524. Residues lysine 516 and lysine 524 each participate in a glycyl lysine isopeptide (Lys-Gly) (interchain with G-Cter in SUMO2); alternate cross-link. Threonine 532 bears the Phosphothreonine mark. Residue lysine 536 forms a Glycyl lysine isopeptide (Lys-Gly) (interchain with G-Cter in SUMO2) linkage. Position 551 is an N6-acetyllysine (lysine 551). An N6-acetyllysine; alternate modification is found at lysine 565. Lysine 565 is covalently cross-linked (Glycyl lysine isopeptide (Lys-Gly) (interchain with G-Cter in SUMO2); alternate). Residue lysine 574 forms a Glycyl lysine isopeptide (Lys-Gly) (interchain with G-Cter in SUMO2) linkage. Threonine 582 bears the Phosphothreonine mark. Residues lysine 609 and lysine 626 each participate in a glycyl lysine isopeptide (Lys-Gly) (interchain with G-Cter in SUMO2) cross-link. The actin-binding stretch occupies residues 611 to 626 (EDYKQRTQKKAEVEGK). Residue lysine 635 is modified to N6-acetyllysine; alternate. Lysine 635 is covalently cross-linked (Glycyl lysine isopeptide (Lys-Gly) (interchain with G-Cter in SUMO2); alternate). Residues lysine 664 and lysine 670 each participate in a glycyl lysine isopeptide (Lys-Gly) (interchain with G-Cter in SUMO2) cross-link. Over residues 671–683 (EESKKALPPEKKQ) the composition is skewed to basic and acidic residues. The tract at residues 671–749 (EESKKALPPE…GGGGGGSGGI (79 aa)) is disordered. Arginine 702 bears the Omega-N-methylarginine mark. The segment covering 710–728 (GGFNMRGGNFRGGAPGNRG) has biased composition (gly residues). The segment at 714–739 (MRGGNFRGGAPGNRGGYNRRGNMPQR) is RNA-binding RGG-box. 3 positions are modified to asymmetric dimethylarginine: arginine 715, arginine 720, and arginine 727. 2 positions are modified to asymmetric dimethylarginine; alternate: arginine 733 and arginine 739. Omega-N-methylarginine; alternate is present on residues arginine 733 and arginine 739. Position 739 is a dimethylated arginine; in A2780 ovarian carcinoma cell line (arginine 739). Gly residues predominate over residues 739–749 (RGGGGGGSGGI). An asymmetric dimethylarginine mark is found at arginine 755 and arginine 762. Residues 769 to 799 (GNYNRGGMPNRGNYNQNFRGRGNNRGYKNQS) form a disordered region. The span at 778 to 799 (NRGNYNQNFRGRGNNRGYKNQS) shows a compositional bias: low complexity. Lysine 814 is modified (N6-acetyllysine; alternate). Residue lysine 814 forms a Glycyl lysine isopeptide (Lys-Gly) (interchain with G-Cter in SUMO2); alternate linkage.

As to quaternary structure, oligomer (via ATPase domain and RNA-binding RGG-box region); oligomerization occurs upon ATP-binding in a chromatin-associated RNAs (caRNAs)- and transcription-dependent manner and is required for chromatin decompaction. ATP hydrolysis is required to cycle from an oligomeric to monomeric state to compact chromatin. Component of the coding region determinant (CRD)-mediated complex, composed of DHX9, HNRNPU, IGF2BP1, SYNCRIP and YBX1. Identified in the spliceosome C complex. Identified in a IGF2BP1-dependent mRNP granule complex containing untranslated mRNAs. Associates with heterogeneous nuclear ribonucleoprotein (hnRNP) particles. Associates (via middle region) with the C-terminal domain (CTD) RNA polymerase II (Pol II) holoenzyme; this association occurs in a RNA-independent manner. Associates (via middle region) with the core-TFIIH basal transcription factor complex; this association inhibits the CTD phosphorylation of RNA polymerase II holoenzyme by down-regulating TFIIH kinase activity. Associates with the telomerase holoenzyme complex. Associates with spindle microtubules (MTs) in a TPX2-dependent manner. Interacts (via C-terminus) with actin; this interaction is direct and mediates association with the phosphorylated CTD of RNA polymerase II and is disrupted in presence of the long non-coding H19 RNA. Interacts with AURKA. Interacts (via C-terminus) with CBX5; this interaction is, at least in part, RNA-dependent. Interacts with CR2. Interacts with CRY1. Interacts (via C-terminus) with EP300; this interaction enhances DNA-binding to nuclear scaffold/matrix attachment region (S/MAR) elements. Interacts with ERBB4. Interacts with GEMIN5. Interacts with IGF2BP1. Interacts with IGF2BP2 and IGF2BP3. Interacts with NCL; this interaction occurs during mitosis. Interacts (via C-terminus) with NR3C1 (via C-terminus). Interacts with PLK1; this interaction induces phosphorylation of HNRNPU at Ser-59 in mitosis. Interacts with POU3F4. Interacts with SMARCA4; this interaction occurs in embryonic stem cells and stimulates global Pol II-mediated transcription. Interacts (via C-terminus) with TOP2A; this interaction protects the topoisomerase TOP2A from degradation and positively regulates the relaxation of supercoiled DNA by TOP2A in a RNA-dependent manner. Interacts with TPX2; this interaction recruits HNRNPU to spindle microtubules (MTs). Interacts with UBQLN2. Interacts (via RNA-binding RGG-box region) with ZBTB7B; the interaction facilitates the recruitment of long non-coding RNA Blnc1 by ZBTB7B. Interacts with ERCC6. In terms of assembly, (Microbial infection) Interacts with HIV-1 protein Rev. Cleaved at Asp-100 by CASP3 during T-cell apoptosis, resulting in a loss of DNA- and chromatin-binding activities. In terms of processing, extensively phosphorylated. Phosphorylated on Ser-59 by PLK1 and dephosphorylated by protein phosphatase 2A (PP2A) in mitosis. Post-translationally, arg-739 is dimethylated, probably to asymmetric dimethylarginine. Arg-733 is dimethylated, probably to asymmetric dimethylarginine. Citrullinated by PADI4. In terms of tissue distribution, widely expressed.

Its subcellular location is the nucleus. The protein resides in the nucleus matrix. It localises to the chromosome. It is found in the nucleus speckle. The protein localises to the cytoplasm. Its subcellular location is the cytoskeleton. The protein resides in the microtubule organizing center. It localises to the centrosome. It is found in the centromere. The protein localises to the kinetochore. Its subcellular location is the spindle. The protein resides in the spindle pole. It localises to the midbody. It is found in the cell surface. The protein localises to the cytoplasmic granule. Functionally, DNA- and RNA-binding protein involved in several cellular processes such as nuclear chromatin organization, telomere-length regulation, transcription, mRNA alternative splicing and stability, Xist-mediated transcriptional silencing and mitotic cell progression. Plays a role in the regulation of interphase large-scale gene-rich chromatin organization through chromatin-associated RNAs (caRNAs) in a transcription-dependent manner, and thereby maintains genomic stability. Required for the localization of the long non-coding Xist RNA on the inactive chromosome X (Xi) and the subsequent initiation and maintenance of X-linked transcriptional gene silencing during X-inactivation. Plays a role as a RNA polymerase II (Pol II) holoenzyme transcription regulator. Promotes transcription initiation by direct association with the core-TFIIH basal transcription factor complex for the assembly of a functional pre-initiation complex with Pol II in a actin-dependent manner. Blocks Pol II transcription elongation activity by inhibiting the C-terminal domain (CTD) phosphorylation of Pol II and dissociates from Pol II pre-initiation complex prior to productive transcription elongation. Positively regulates CBX5-induced transcriptional gene silencing and retention of CBX5 in the nucleus. Negatively regulates glucocorticoid-mediated transcriptional activation. Key regulator of transcription initiation and elongation in embryonic stem cells upon leukemia inhibitory factor (LIF) signaling. Involved in the long non-coding RNA H19-mediated Pol II transcriptional repression. Participates in the circadian regulation of the core clock component BMAL1 transcription. Plays a role in the regulation of telomere length. Plays a role as a global pre-mRNA alternative splicing modulator by regulating U2 small nuclear ribonucleoprotein (snRNP) biogenesis. Plays a role in mRNA stability. Component of the CRD-mediated complex that promotes MYC mRNA stabilization. Enhances the expression of specific genes, such as tumor necrosis factor TNFA, by regulating mRNA stability, possibly through binding to the 3'-untranslated region (UTR). Plays a role in mitotic cell cycle regulation. Involved in the formation of stable mitotic spindle microtubules (MTs) attachment to kinetochore, spindle organization and chromosome congression. Phosphorylation at Ser-59 by PLK1 is required for chromosome alignement and segregation and progression through mitosis. Also contributes to the targeting of AURKA to mitotic spindle MTs. Binds to double- and single-stranded DNA and RNA, poly(A), poly(C) and poly(G) oligoribonucleotides. Binds to chromatin-associated RNAs (caRNAs). Associates with chromatin to scaffold/matrix attachment region (S/MAR) elements in a chromatin-associated RNAs (caRNAs)-dependent manner. Binds to the Xist RNA. Binds the long non-coding H19 RNA. Binds to SMN1/2 pre-mRNAs at G/U-rich regions. Binds to small nuclear RNAs (snRNAs). Binds to the 3'-UTR of TNFA mRNA. Binds (via RNA-binding RGG-box region) to the long non-coding Xist RNA; this binding is direct and bridges the Xist RNA and the inactive chromosome X (Xi). Also negatively regulates embryonic stem cell differentiation upon LIF signaling. Required for embryonic development. Binds to brown fat long non-coding RNA 1 (Blnc1); facilitates the recruitment of Blnc1 by ZBTB7B required to drive brown and beige fat development and thermogenesis. (Microbial infection) Negatively regulates immunodeficiency virus type 1 (HIV-1) replication by preventing the accumulation of viral mRNA transcripts in the cytoplasm. The polypeptide is Heterogeneous nuclear ribonucleoprotein U (Homo sapiens (Human)).